The chain runs to 307 residues: Nuclear polyadenylated RNA-binding protein nab2 (307 aa).

The tract at residues 102-135 (STDKSQQSFSVPETSIQPQSSQTPNITSLREEKE) is disordered. The segment covering 105 to 129 (KSQQSFSVPETSIQPQSSQTPNITS) has biased composition (polar residues). 3 consecutive C3H1-type zinc fingers follow at residues 178-202 (TQEV…HPTP), 217-232 (CASG…VKGH), and 254-268 (CKYK…RFIH). A disordered region spans residues 274-307 (NMTWRPPSKTEETSLSERSFAVNESEEQLHVPSV).

Belongs to the ZC3H14 family.

The protein resides in the nucleus. Functionally, RNA-binding protein involved in RNA processing. Acts as a regulator of mRNA stability: binds to mRNAs and pre-mRNAs, preventing their degradation. Involved in the biogenesis of circular RNAs (circRNAs) which are produced by back-splicing circularization of pre-mRNAs. The sequence is that of Nuclear polyadenylated RNA-binding protein nab2 from Schizosaccharomyces pombe (strain 972 / ATCC 24843) (Fission yeast).